We begin with the raw amino-acid sequence, 566 residues long: DNA ligase B (566 aa).

Lysine 125 functions as the N6-AMP-lysine intermediate in the catalytic mechanism.

Belongs to the NAD-dependent DNA ligase family. LigB subfamily.

It carries out the reaction NAD(+) + (deoxyribonucleotide)n-3'-hydroxyl + 5'-phospho-(deoxyribonucleotide)m = (deoxyribonucleotide)n+m + AMP + beta-nicotinamide D-nucleotide.. Functionally, catalyzes the formation of phosphodiester linkages between 5'-phosphoryl and 3'-hydroxyl groups in double-stranded DNA using NAD as a coenzyme and as the energy source for the reaction. The chain is DNA ligase B from Pseudomonas putida (strain GB-1).